A 209-amino-acid chain; its full sequence is uncharacterized protein (209 aa).

Residues 1–15 are compositionally biased toward basic and acidic residues; that stretch reads MHRIDTKTAQKDKFG. Positions 1-34 are disordered; sequence MHRIDTKTAQKDKFGAGKNGFTRGNPQTGTPATD. A compositionally biased stretch (polar residues) spans 22 to 31; the sequence is TRGNPQTGTP.

This sequence to E.coli YfdL and M.jannaschii MJ0347.

This is an uncharacterized protein from Escherichia coli (strain K12).